A 161-amino-acid polypeptide reads, in one-letter code: MVRPYTRKDYIRKIPASKIVQYDMGNLSGEFPLEVTLAVKEHTHLSHNSLEAARIAANRYLQRTTGKLGYRLKIRTYPHHIVRENPMATGAGADRVQSGMRGAFGKAVSSEALVRANQKIITAYVQVKDFEKAKVALNRAAMKLPVTCKLVIDKGHDLVQF.

Belongs to the universal ribosomal protein uL16 family.

In Methanosphaera stadtmanae (strain ATCC 43021 / DSM 3091 / JCM 11832 / MCB-3), this protein is Large ribosomal subunit protein uL16.